The sequence spans 755 residues: Tryptophan 2-monooxygenase (755 aa).

FMN contacts are provided by serine 247, glutamate 267, lysine 275, and arginine 295. Residue arginine 295 participates in substrate binding.

The protein belongs to the tryptophan 2-monooxygenase family. FMN serves as cofactor.

The enzyme catalyses L-tryptophan + O2 = indole-3-acetamide + CO2 + H2O. It functions in the pathway plant hormone metabolism; auxin biosynthesis. The polypeptide is Tryptophan 2-monooxygenase (tms1) (Rhizobium radiobacter (Agrobacterium tumefaciens)).